The following is a 325-amino-acid chain: ATP synthase gamma chain (325 aa).

Belongs to the ATPase gamma chain family. As to quaternary structure, F-type ATPases have 2 components, CF(1) - the catalytic core - and CF(0) - the membrane proton channel. CF(1) has five subunits: alpha(3), beta(3), gamma(1), delta(1), epsilon(1). CF(0) has three main subunits: a, b and c.

It localises to the cell membrane. Functionally, produces ATP from ADP in the presence of a proton gradient across the membrane. The gamma chain is believed to be important in regulating ATPase activity and the flow of protons through the CF(0) complex. The sequence is that of ATP synthase gamma chain from Corynebacterium glutamicum (strain R).